The primary structure comprises 436 residues: Chromosomal replication initiator protein DnaA (436 aa).

The tract at residues 1-69 (MLADEILELL…AYLYEVKTGK (69 aa)) is domain I, interacts with DnaA modulators. Residues 69-99 (KKPEVEITSQTKLKNIKQNQVNVKQIKAQSS) are domain II. The domain III, AAA+ region stretch occupies residues 100–314 (ILNPGYTFEN…GAIINLNAYA (215 aa)). ATP-binding residues include Gly144, Gly146, Lys147, and Thr148. A domain IV, binds dsDNA region spans residues 315-436 (SLMRVEITLE…EIKNKILTKG (122 aa)).

The protein belongs to the DnaA family. As to quaternary structure, oligomerizes as a right-handed, spiral filament on DNA at oriC.

It localises to the cytoplasm. In terms of biological role, plays an essential role in the initiation and regulation of chromosomal replication. ATP-DnaA binds to the origin of replication (oriC) to initiate formation of the DNA replication initiation complex once per cell cycle. Binds the DnaA box (a 9 base pair repeat at the origin) and separates the double-stranded (ds)DNA. Forms a right-handed helical filament on oriC DNA; dsDNA binds to the exterior of the filament while single-stranded (ss)DNA is stabiized in the filament's interior. The ATP-DnaA-oriC complex binds and stabilizes one strand of the AT-rich DNA unwinding element (DUE), permitting loading of DNA polymerase. After initiation quickly degrades to an ADP-DnaA complex that is not apt for DNA replication. Binds acidic phospholipids. The sequence is that of Chromosomal replication initiator protein DnaA from Campylobacter concisus (strain 13826).